The chain runs to 1003 residues: MECVQTLWLSLALALARGSWVVRGHPQPCGVPTRAGASVRLAALLPRAPAARARVLAALATPSPRLPHNLSLELVAVASPTRDPASLARGLCQVLAPPGVVASITFPEARPELRLLQFLAAATETPVLSVLRREVRAPLGAPTPFHLQLDWASPLETILDVLVSLVRAHAWEDIALVLCRVRDPSGLVTLWTSRASQAPKFVLDLSQLDSGNDSLRATLALLGTLEGGGTPVSAAVLLGCSTAHAHEVLEAAPPGPQWLLGTPLPAEALPKTGLPPGVLVLGETGQPSLEAAVHDMVELVARALSSMALMHPERALLPAAVNCEDLKTGGSESTARTLARFLSNTSFQGRTGAVWVAGSSQVHVSRHFKVWSLRRDPLGAPAWATVGSWQDGQLDFQPGAAALRVPSPSGTQARPKLRVVTLVEHPFVFTRESDEDGQCPAGQLCLDPGTNDSARLDALFTALENGSVPRTLRRCCYGYCIDLLERLAEDLAFDFELYIVGDGKYGALRDGRWTGLVGDLLAGRAHMAVTSFSINSARSQVVDFTSPFFSTSLGIMVRTRDTASPIGAFMWPLHWSMWVGVFAALHLTALFLTLYEWRSPYGLTPRGRNRGTVFSYSSALNLCYAILFGRTVSSKTPKCPTGRFLMNLWAIFCLLVLSSYTANLAAVMVGDKTFEELSGIHDPKLHHPSQGFRFGTVWESSAEAYIKASFPEMHAHMRRHSAPTTPHGVAMLTSDPPKLNAFIMDKSLLDYEVSIDADCKLLTVGKPFAIEGYGIGLPQNSPLTSNLSEFISRYKSSGFIDLLHDKWYKMVPCGKRVFAVTETLQMGVYHLSGLFVLLCLGLGSALLTSLGEHVFYRLVLPRIRRGNKLQYWLHTSQKIHRALNTGPPEGQQERAEQECSGPKEEQPAADGAGRWRRVRRAVVERERRVRFLLEPGEAGGDHPWLCSNGPGVQAELRELELRIEAARERLRSALLRRGELRAQLGDGTRLRPLRLLHAAPAES.

The first 24 residues, methionine 1 to glycine 24, serve as a signal peptide directing secretion. Residues histidine 25–histidine 574 are Extracellular-facing. N-linked (GlcNAc...) asparagine glycans are attached at residues asparagine 69, asparagine 212, asparagine 344, asparagine 451, and asparagine 465. 2 cysteine pairs are disulfide-bonded: cysteine 439–cysteine 475 and cysteine 445–cysteine 476. Residues serine 531, serine 533, and arginine 538 each contribute to the glycine site. Serine 533 and arginine 538 together coordinate D-serine. A helical transmembrane segment spans residues tryptophan 575 to leucine 594. Residues tyrosine 595–serine 615 lie on the Cytoplasmic side of the membrane. Positions tyrosine 616–leucine 627 form an intramembrane region, discontinuously helical. Over phenylalanine 628–threonine 641 the chain is Cytoplasmic. A helical transmembrane segment spans residues glycine 642 to threonine 661. Residues alanine 662–serine 832 are Extracellular-facing. Serine 701 is a glycine binding site. Residues serine 701, alanine 702, and aspartate 745 each contribute to the D-serine site. Residue aspartate 745 coordinates glycine. Asparagine 786 carries N-linked (GlcNAc...) asparagine glycosylation. The helical transmembrane segment at glycine 833–threonine 848 threads the bilayer. The Cytoplasmic portion of the chain corresponds to serine 849–serine 1003. The interval leucine 883–alanine 912 is disordered. Over residues glutamine 891–glutamine 906 the composition is skewed to basic and acidic residues. Residues serine 947–aspartate 986 are a coiled coil. An involved in the trafficking and surface expression of NMDARs region spans residues valine 952–glycine 985.

This sequence belongs to the glutamate-gated ion channel (TC 1.A.10.1) family. NR3B/GRIN3B subfamily. In terms of assembly, forms heterotetrameric channels that contain at least two GluN1 subunits and at least a combination of one GluN2 and one GluN3 subunits (in vitro). Forms heterotetrameric channels composed of two GluN1/zeta subunits (GRIN1), and two identical GluN3 subunits (GRIN3A or GRIN3B) (in vitro). Does not form functional homomeric channels. In terms of tissue distribution, expressed in the facial nucleus and the ambiguus nucleus of the brainstem, pons, medulla, spinal cord and cerebellum.

The protein resides in the cell membrane. It is found in the postsynaptic cell membrane. The catalysed reaction is Ca(2+)(in) = Ca(2+)(out). The enzyme catalyses Na(+)(in) = Na(+)(out). Functionally, component of a non-conventional N-methyl-D-aspartate (NMDA) receptors (NMDARs) that function as heterotetrameric, ligand-gated cation channels with low calcium permeability and low voltage-dependent block by Mg(2+). Forms glutamatergic receptor complexes with GluN1 and GluN2 subunits which are activated by glycine binding to the GluN1 and GluN3 subunits and L-glutamate binding to GluN2 subunits. Forms excitatory glycinergic receptor complexes with GluN1 alone which are activated by glycine binding to the GluN1 and GluN3 subunits. GluN3B subunit also binds D-serine and, in the absence of glycine, activates glycinergic receptor complexes, but with lower efficacy than glycine. Each GluN3 subunit confers differential attributes to channel properties, including activation, deactivation and desensitization kinetics, pH sensitivity, Ca2(+) permeability, and binding to allosteric modulators. The polypeptide is Glutamate receptor ionotropic, NMDA 3B (Mus musculus (Mouse)).